A 319-amino-acid polypeptide reads, in one-letter code: Ankyrin repeat domain-containing protein 1 (319 aa).

Positions 61–89 (KTEKQREAELKKKKLEQRSKLENLEDLEI) form a coiled coil. ANK repeat units follow at residues 152–181 (YKRT…QIEF), 185–214 (LEST…KISA), 218–247 (LLST…DLNA), 251–280 (EGDT…DLNV), and 284–315 (AGKT…KASR).

Interacts with TTN/titin and YBX1.

Its subcellular location is the nucleus. In terms of biological role, may play an important role in endothelial cell activation. May act as a nuclear transcription factor that negatively regulates the expression of cardiac genes. The protein is Ankyrin repeat domain-containing protein 1 (ANKRD1) of Bos taurus (Bovine).